Consider the following 184-residue polypeptide: Probable type 3 secretion system regulator AscH (184 aa).

Residues 1-25 (MKIEGSDQLGGEQPQRQPLPPESMA) are disordered.

It belongs to the YopR family.

It is found in the secreted. Its function is as follows. May be involved in the regulation of the assembly of the type III secretion system (T3SS), also called injectisome, which is used to inject bacterial effector proteins into eukaryotic host cells. May control the polymerization of the needle. This Aeromonas salmonicida subsp. salmonicida protein is Probable type 3 secretion system regulator AscH.